The sequence spans 318 residues: Aspartate carbamoyltransferase catalytic subunit (318 aa).

Positions 64 and 65 each coordinate carbamoyl phosphate. Residue Lys92 coordinates L-aspartate. Arg114, His142, and Gln145 together coordinate carbamoyl phosphate. Residues Arg175 and Arg229 each coordinate L-aspartate. Gly270 and Pro271 together coordinate carbamoyl phosphate.

Belongs to the aspartate/ornithine carbamoyltransferase superfamily. ATCase family. In terms of assembly, heterododecamer (2C3:3R2) of six catalytic PyrB chains organized as two trimers (C3), and six regulatory PyrI chains organized as three dimers (R2).

The enzyme catalyses carbamoyl phosphate + L-aspartate = N-carbamoyl-L-aspartate + phosphate + H(+). The protein operates within pyrimidine metabolism; UMP biosynthesis via de novo pathway; (S)-dihydroorotate from bicarbonate: step 2/3. Its function is as follows. Catalyzes the condensation of carbamoyl phosphate and aspartate to form carbamoyl aspartate and inorganic phosphate, the committed step in the de novo pyrimidine nucleotide biosynthesis pathway. The polypeptide is Aspartate carbamoyltransferase catalytic subunit (Rhodospirillum centenum (strain ATCC 51521 / SW)).